The sequence spans 41 residues: Augerpeptide-s11a (41 aa).

Post-translationally, contains 4 disulfide bonds. As to expression, expressed by the venom duct.

The protein resides in the secreted. Functionally, does not elicit any observable symptomatology in C.elegans. In Terebra subulata (Chocolate spotted auger), this protein is Augerpeptide-s11a.